The following is a 468-amino-acid chain: 6-phospho-beta-galactosidase (468 aa).

Positions 19, 116, 159, 160, and 297 each coordinate D-galactose 6-phosphate. Glu-160 acts as the Proton donor in catalysis. The Nucleophile role is filled by Glu-375. Residues Ser-428, Trp-429, Lys-435, and Tyr-437 each coordinate D-galactose 6-phosphate.

The protein belongs to the glycosyl hydrolase 1 family.

The enzyme catalyses a 6-phospho-beta-D-galactoside + H2O = D-galactose 6-phosphate + an alcohol. Its pathway is carbohydrate metabolism; lactose degradation; D-galactose 6-phosphate and beta-D-glucose from lactose 6-phosphate: step 1/1. In Streptococcus pyogenes serotype M28 (strain MGAS6180), this protein is 6-phospho-beta-galactosidase.